The chain runs to 218 residues: Protein-L-isoaspartate O-methyltransferase (218 aa).

Ser60 is an active-site residue.

Belongs to the methyltransferase superfamily. L-isoaspartyl/D-aspartyl protein methyltransferase family.

It is found in the cytoplasm. The catalysed reaction is [protein]-L-isoaspartate + S-adenosyl-L-methionine = [protein]-L-isoaspartate alpha-methyl ester + S-adenosyl-L-homocysteine. Its function is as follows. Catalyzes the methyl esterification of L-isoaspartyl residues in peptides and proteins that result from spontaneous decomposition of normal L-aspartyl and L-asparaginyl residues. It plays a role in the repair and/or degradation of damaged proteins. This is Protein-L-isoaspartate O-methyltransferase from Roseiflexus sp. (strain RS-1).